Consider the following 200-residue polypeptide: Cysteine-rich venom protein VAR8 (200 aa).

The N-terminal stretch at 1–22 (MILLKLYLTLAAILCQSRGTTS) is a signal peptide. Positions 41–169 (NKHNDLRRTV…PLKYFLVCQY (129 aa)) constitute an SCP domain. 4 disulfides stabilise this stretch: Cys77–Cys156, Cys95–Cys170, Cys151–Cys167, and Cys189–Cys196.

It belongs to the CRISP family. In terms of processing, contains 8 disulfide bonds. Expressed by the venom gland.

The protein localises to the secreted. In terms of biological role, blocks ryanodine receptors, and potassium channels. This is Cysteine-rich venom protein VAR8 from Varanus acanthurus (Ridge-tailed monitor).